A 481-amino-acid chain; its full sequence is Regulator of G-protein signaling 1 (481 aa).

Positions 1–31 (MPALHNPSSPPPSYEAVTSYRNGNSIDSGDK) are disordered. The tract at residues 33–227 (QQCSRLMKIT…SVHEIGKSKN (195 aa)) is fungal-DR. Residues 232–312 (PVYSVSSPSP…KGVSYFLTGK (81 aa)) enclose the DEP domain. The 131-residue stretch at 344–474 (ILETILRKPN…AGDSLLKFLE (131 aa)) folds into the RGS domain.

The protein localises to the nucleus. Its subcellular location is the cytoplasm. Its function is as follows. Negatively regulates pheromone signaling during mating. Acts in a negative feedback loop that is essential for the mating process. This loop acts to down-regulate cellular sensitivity to pheromone. Activated by ste11. The sequence is that of Regulator of G-protein signaling 1 (rgs1) from Schizosaccharomyces pombe (strain 972 / ATCC 24843) (Fission yeast).